Reading from the N-terminus, the 156-residue chain is Small ribosomal subunit protein uS7 (156 aa).

The protein belongs to the universal ribosomal protein uS7 family. In terms of assembly, part of the 30S ribosomal subunit. Contacts proteins S9 and S11.

In terms of biological role, one of the primary rRNA binding proteins, it binds directly to 16S rRNA where it nucleates assembly of the head domain of the 30S subunit. Is located at the subunit interface close to the decoding center, probably blocks exit of the E-site tRNA. The sequence is that of Small ribosomal subunit protein uS7 from Thermobifida fusca (strain YX).